The sequence spans 138 residues: Large ribosomal subunit protein uL16 (138 aa).

Over residues 1-17 (MLIPRKVKHRKQHHPKQ) the composition is skewed to basic residues. A disordered region spans residues 1–24 (MLIPRKVKHRKQHHPKQRGIASGG).

This sequence belongs to the universal ribosomal protein uL16 family. Part of the 50S ribosomal subunit.

Functionally, binds 23S rRNA and is also seen to make contacts with the A and possibly P site tRNAs. This chain is Large ribosomal subunit protein uL16, found in Mycolicibacterium vanbaalenii (strain DSM 7251 / JCM 13017 / BCRC 16820 / KCTC 9966 / NRRL B-24157 / PYR-1) (Mycobacterium vanbaalenii).